A 100-amino-acid polypeptide reads, in one-letter code: Guanine nucleotide exchange factor MSS4 homolog (100 aa).

Residues 1 to 100 (MSNLRIVCQH…YLLLCSLEKN (100 aa)) form the MSS4 domain. Zn(2+) contacts are provided by cysteine 8, cysteine 11, cysteine 73, and cysteine 76.

It belongs to the DSS4/MSS4 family.

Guanine-nucleotide-releasing protein that acts on members of the sec4/ypt1/rab subfamily. The sequence is that of Guanine nucleotide exchange factor MSS4 homolog from Schizosaccharomyces pombe (strain 972 / ATCC 24843) (Fission yeast).